The chain runs to 621 residues: Kininogen-1 (621 aa).

The first 18 residues, Met-1 to Thr-18, serve as a signal peptide directing secretion. One can recognise a Cystatin kininogen-type 1 domain in the interval Cys-27 to Glu-131. 9 disulfides stabilise this stretch: Cys-27–Cys-591, Cys-82–Cys-93, Cys-106–Cys-125, Cys-141–Cys-144, Cys-205–Cys-217, Cys-228–Cys-247, Cys-263–Cys-266, Cys-327–Cys-339, and Cys-350–Cys-369. 2 N-linked (GlcNAc...) asparagine glycosylation sites follow: Asn-47 and Asn-87. Thr-136 is a glycosylation site (O-linked (GalNAc...) threonine; partial). A Cystatin kininogen-type 2 domain is found at Thr-150 to Lys-253. N-linked (GlcNAc...) asparagine glycans are attached at residues Asn-168 and Asn-169. The N-linked (GlcNAc...) asparagine; partial glycan is linked to Asn-197. N-linked (GlcNAc...) asparagine glycosylation is present at Asn-204. In terms of domain architecture, Cystatin kininogen-type 3 spans Val-272–Thr-375. Ser-331 carries the phosphoserine modification. The segment at Glu-396–Trp-497 is disordered. O-linked (GalNAc...) serine glycosylation is present at Ser-398. O-linked (GalNAc...) threonine glycosylation is found at Thr-399 and Thr-400. O-linked (GalNAc...) serine glycosylation occurs at Ser-406. Residues Gly-444 to Gly-492 are compositionally biased toward basic residues. An O-linked (GalNAc...) serine glycan is attached at Ser-512. Residues Thr-520, Thr-524, Thr-536, Thr-548, Thr-553, and Thr-570 are each glycosylated (O-linked (GalNAc...) threonine). Ser-581 carries O-linked (GalNAc...) serine glycosylation.

Post-translationally, bradykinin is released from kininogen by plasma kallikrein. In terms of processing, phosphorylated by FAM20C in the extracellular medium. Bradykinin is inactivated by ACE, which removes the dipeptide Arg-Phe from its C-terminus. As to expression, plasma.

It localises to the secreted. The protein localises to the extracellular space. Functionally, kininogens are inhibitors of thiol proteases. HMW-kininogen plays an important role in blood coagulation by helping to position optimally prekallikrein and factor XI next to factor XII; HMW-kininogen inhibits the thrombin- and plasmin-induced aggregation of thrombocytes. LMW-kininogen inhibits the aggregation of thrombocytes. LMW-kininogen is in contrast to HMW-kininogen not involved in blood clotting. Its function is as follows. The active peptide bradykinin is a potent vasodilatator that is released from HMW-kininogen shows a variety of physiological effects: (A) influence in smooth muscle contraction, (B) induction of hypotension, (C) natriuresis and diuresis, (D) decrease in blood glucose level, (E) it is a mediator of inflammation and causes (E1) increase in vascular permeability, (E2) stimulation of nociceptors (4E3) release of other mediators of inflammation (e.g. prostaglandins), (F) it has a cardioprotective effect (directly via bradykinin action, indirectly via endothelium-derived relaxing factor action). The polypeptide is Kininogen-1 (KNG1) (Bos taurus (Bovine)).